We begin with the raw amino-acid sequence, 292 residues long: Acetyl-coenzyme A carboxylase carboxyl transferase subunit beta (292 aa).

The 270-residue stretch at 23-292 (VWSKCTACGN…TEATEVSVNE (270 aa)) folds into the CoA carboxyltransferase N-terminal domain. Residues cysteine 27, cysteine 30, cysteine 46, and cysteine 49 each contribute to the Zn(2+) site. Residues 27 to 49 (CTACGNIIYKADLERSLNVCPKC) form a C4-type zinc finger.

The protein belongs to the AccD/PCCB family. In terms of assembly, acetyl-CoA carboxylase is a heterohexamer composed of biotin carboxyl carrier protein (AccB), biotin carboxylase (AccC) and two subunits each of ACCase subunit alpha (AccA) and ACCase subunit beta (AccD). The cofactor is Zn(2+).

The protein localises to the cytoplasm. The enzyme catalyses N(6)-carboxybiotinyl-L-lysyl-[protein] + acetyl-CoA = N(6)-biotinyl-L-lysyl-[protein] + malonyl-CoA. The protein operates within lipid metabolism; malonyl-CoA biosynthesis; malonyl-CoA from acetyl-CoA: step 1/1. Component of the acetyl coenzyme A carboxylase (ACC) complex. Biotin carboxylase (BC) catalyzes the carboxylation of biotin on its carrier protein (BCCP) and then the CO(2) group is transferred by the transcarboxylase to acetyl-CoA to form malonyl-CoA. The polypeptide is Acetyl-coenzyme A carboxylase carboxyl transferase subunit beta (Idiomarina loihiensis (strain ATCC BAA-735 / DSM 15497 / L2-TR)).